Here is a 221-residue protein sequence, read N- to C-terminus: MTAQIIIAVPKGRILKEVLPLFAALGIVPEPAFGDEDSRLLRFATNRSDIGLIRVRAFDVATFVAHGAAQLGIVGSDVLMEFDYSELYAPVDLAIGHCRISVAEPVAMAAGDDPREWSHVRVATKYPNITRRHFEARGVQAECVKLNGAMEIAPVLGLSSRIVDLVSTGRTLKDNGLAEVETIAEVSSRLIVNRAAFKTRAGEIGPLVEGFRRAVEDKNAA.

It belongs to the ATP phosphoribosyltransferase family. Short subfamily. Heteromultimer composed of HisG and HisZ subunits.

The protein localises to the cytoplasm. It catalyses the reaction 1-(5-phospho-beta-D-ribosyl)-ATP + diphosphate = 5-phospho-alpha-D-ribose 1-diphosphate + ATP. It functions in the pathway amino-acid biosynthesis; L-histidine biosynthesis; L-histidine from 5-phospho-alpha-D-ribose 1-diphosphate: step 1/9. In terms of biological role, catalyzes the condensation of ATP and 5-phosphoribose 1-diphosphate to form N'-(5'-phosphoribosyl)-ATP (PR-ATP). Has a crucial role in the pathway because the rate of histidine biosynthesis seems to be controlled primarily by regulation of HisG enzymatic activity. The sequence is that of ATP phosphoribosyltransferase from Rhizorhabdus wittichii (strain DSM 6014 / CCUG 31198 / JCM 15750 / NBRC 105917 / EY 4224 / RW1) (Sphingomonas wittichii).